We begin with the raw amino-acid sequence, 1563 residues long: Rab-3-interacting molecule unc-10 (1563 aa).

Residues 7–133 form the RabBD domain; sequence MPDLSHLSAE…AKTGKWFQPE (127 aa). Residues 25–35 show a composition bias toward basic and acidic residues; that stretch reads FKRQKDEEAKE. The segment at 25 to 50 is disordered; sequence FKRQKDEEAKETQISQKASEELSELD. The FYVE-type zinc finger occupies 66 to 121; sequence TQDDAICQICQKTKFADGIGHKCFYCQLRSCARCGGRAQSKNKAIWACSLCQKRQQ. Cys72, Cys75, Cys88, Cys91, Cys96, Cys99, Cys113, and Cys116 together coordinate Zn(2+). 2 disordered regions span residues 128-466 and 582-605; these read KWFQ…DHLN and GGLDMQANRRRDKSLSLSPSRNDH. Over residues 172–182 the composition is skewed to polar residues; that stretch reads NTPNYQNNQQP. Low complexity-rich tracts occupy residues 190–284 and 300–316; these read NHNQ…RNQT and QTPQQQPSQYQNNVGAA. The span at 326–345 shows a compositional bias: basic and acidic residues; it reads QEQHHQQMNEQRTDNNRMRE. Polar residues-rich tracts occupy residues 356 to 367 and 379 to 389; these read RQPSLEQTTPMN and QRPTFYTGNSE. Residues 395 to 415 are compositionally biased toward low complexity; it reads FDGQMQQGSQQNNQNQNQNNR. A PDZ domain is found at 643-733; the sequence is HMILHRTENS…DTSVELIVSR (91 aa). Residues 840 to 962 form the C2 1 domain; it reads IFGRIEVSFV…PLDGEHSLMC (123 aa). Disordered regions lie at residues 1054–1163, 1177–1311, and 1346–1373; these read ENDI…YLGD, GQMT…GGSA, and VGIPGNLSSDRLTEPTPPFLKQASKEST. The segment covering 1086–1097 has biased composition (polar residues); that stretch reads WTQNHQRQSGYT. A compositionally biased stretch (basic residues) spans 1112-1121; the sequence is YNRRQQRRPR. A compositionally biased stretch (basic and acidic residues) spans 1129 to 1154; the sequence is MEREDMYDPTRKHRDDNEYSMRESVR. The segment covering 1181–1230 has biased composition (low complexity); sequence PKQHNQQHQPHPLSQAHQQQQTAGVQPQHHQGFQQQQHPQQPNQQMQQMQ. Polar residues predominate over residues 1242 to 1255; the sequence is GSETLSVHSTNSMP. Residues 1256–1277 show a composition bias toward low complexity; the sequence is TTMTTVNRRNMNANNTSNDNTS. The segment covering 1278-1288 has biased composition (polar residues); sequence FAETPTANTNR. Positions 1297 to 1311 are enriched in low complexity; sequence NSLASSSSVAGGGSA. Positions 1417 to 1536 constitute a C2 2 domain; it reads VLGEIQIALM…LGSQPLIGWY (120 aa).

As to expression, restricted to discrete puncta in synapse-rich regions of the nervous system including the nerve ring, the ventral nerve cord and the dorsal nerve cord. Localized expression was found in the head.

The protein localises to the synapse. Functionally, regulates the efficiency of a post-docking step of the release pathway. Acts after vesicle docking likely via regulating priming. May regulate the conformational changes in syntaxin. Binding of vesicles via rab-3[GTP] to Rim may signal the presence of a docked synaptic vesicle. Rim may then signal to unc-13 to change the conformation of syntaxin from the closed to the open state. Syntaxin could then engage synaptobrevin on the docked vesicle to form SNARE complexes and to prime the vesicle for release. Not required for the development or the structural organization of synapses. May play a role in regulating entry into the dauer state. The chain is Rab-3-interacting molecule unc-10 from Caenorhabditis elegans.